Here is a 64-residue protein sequence, read N- to C-terminus: Conotoxin Mr3.5 (64 aa).

The signal sequence occupies residues M1–A19. A propeptide spanning residues L20–R46 is cleaved from the precursor. Intrachain disulfides connect C49/C58, C50/C62, and C54/C63. C63 is subject to Cysteine amide.

The protein belongs to the conotoxin M superfamily. Expressed by the venom duct.

The protein localises to the secreted. The protein is Conotoxin Mr3.5 of Conus marmoreus (Marble cone).